We begin with the raw amino-acid sequence, 931 residues long: Bifunctional uridylyltransferase/uridylyl-removing enzyme (931 aa).

Positions 1–383 (MDLATTNDAA…RPGTELRRVP (383 aa)) are uridylyltransferase. Positions 384-739 (EGDDFIIDNN…VGFDEARGVT (356 aa)) are uridylyl-removing. The HD domain maps to 499–622 (VDEHLLRCIG…VQSVEQMKLL (124 aa)). ACT domains lie at 740–822 (ELTI…VVAR) and 851–931 (VIEV…QSVG).

The protein belongs to the GlnD family. Requires Mg(2+) as cofactor.

It catalyses the reaction [protein-PII]-L-tyrosine + UTP = [protein-PII]-uridylyl-L-tyrosine + diphosphate. The catalysed reaction is [protein-PII]-uridylyl-L-tyrosine + H2O = [protein-PII]-L-tyrosine + UMP + H(+). With respect to regulation, uridylyltransferase (UTase) activity is inhibited by glutamine, while glutamine activates uridylyl-removing (UR) activity. Modifies, by uridylylation and deuridylylation, the PII regulatory proteins (GlnB and homologs), in response to the nitrogen status of the cell that GlnD senses through the glutamine level. Under low glutamine levels, catalyzes the conversion of the PII proteins and UTP to PII-UMP and PPi, while under higher glutamine levels, GlnD hydrolyzes PII-UMP to PII and UMP (deuridylylation). Thus, controls uridylylation state and activity of the PII proteins, and plays an important role in the regulation of nitrogen assimilation and metabolism. In Nitrobacter hamburgensis (strain DSM 10229 / NCIMB 13809 / X14), this protein is Bifunctional uridylyltransferase/uridylyl-removing enzyme.